Reading from the N-terminus, the 307-residue chain is MLSTNNLLILLIFSFLITNVKSDLGGPCFSMSTMEGFACGLGVHKNIQIITDCLCYIPGYWEQLDGCDKLVRGPHHTPIDGAEICSRASEYAANPAGFTGETDYYESSTTVMHVVMLDFPTYSPGVTNFLDSSSNDLTTTNTDEINSSITTDEVIPSSSSSYIEIPSETLMESSVSTQPSTIETSETSHATSLEVSSIITGVSSEPLTIVSESGGLNSTEIASTPVVITSPTPQPLLETPSQESSAPNIDSTTPTTIDNTVVDGTTTNDATSVASSTSDVAYVYIGGAMGYPSISVALGLVFIAYLV.

A signal peptide spans methionine 1 to serine 22. N-linked (GlcNAc...) asparagine glycans are attached at residues asparagine 146 and asparagine 217. Positions threonine 232 to valine 261 are disordered. The segment covering threonine 239–proline 254 has biased composition (polar residues). Glycine 286 carries the GPI-anchor amidated glycine lipid modification. Residues glycine 287 to valine 307 constitute a propeptide, removed in mature form.

The protein localises to the cell membrane. The chain is Predicted GPI-anchored protein 44 (PGA44) from Candida albicans (strain SC5314 / ATCC MYA-2876) (Yeast).